A 126-amino-acid chain; its full sequence is Ribosome-binding factor A (126 aa).

It belongs to the RbfA family. Monomer. Binds 30S ribosomal subunits, but not 50S ribosomal subunits or 70S ribosomes.

It localises to the cytoplasm. Functionally, one of several proteins that assist in the late maturation steps of the functional core of the 30S ribosomal subunit. Associates with free 30S ribosomal subunits (but not with 30S subunits that are part of 70S ribosomes or polysomes). Required for efficient processing of 16S rRNA. May interact with the 5'-terminal helix region of 16S rRNA. This Thermosipho africanus (strain TCF52B) protein is Ribosome-binding factor A.